A 361-amino-acid chain; its full sequence is Phosphoserine aminotransferase (361 aa).

L-glutamate is bound at residue Arg43. Pyridoxal 5'-phosphate is bound by residues 77-78 (AS), Trp103, Thr153, Asp173, and Gln196. N6-(pyridoxal phosphate)lysine is present on Lys197. Residue 238-239 (NT) participates in pyridoxal 5'-phosphate binding.

This sequence belongs to the class-V pyridoxal-phosphate-dependent aminotransferase family. SerC subfamily. Homodimer. The cofactor is pyridoxal 5'-phosphate.

The protein resides in the cytoplasm. The catalysed reaction is O-phospho-L-serine + 2-oxoglutarate = 3-phosphooxypyruvate + L-glutamate. It catalyses the reaction 4-(phosphooxy)-L-threonine + 2-oxoglutarate = (R)-3-hydroxy-2-oxo-4-phosphooxybutanoate + L-glutamate. It participates in amino-acid biosynthesis; L-serine biosynthesis; L-serine from 3-phospho-D-glycerate: step 2/3. Its pathway is cofactor biosynthesis; pyridoxine 5'-phosphate biosynthesis; pyridoxine 5'-phosphate from D-erythrose 4-phosphate: step 3/5. Catalyzes the reversible conversion of 3-phosphohydroxypyruvate to phosphoserine and of 3-hydroxy-2-oxo-4-phosphonooxybutanoate to phosphohydroxythreonine. The protein is Phosphoserine aminotransferase of Pseudomonas syringae pv. syringae (strain B728a).